The following is a 453-amino-acid chain: Glutamyl-tRNA(Gln) amidotransferase subunit A (453 aa).

Catalysis depends on charge relay system residues Lys-53 and Ser-128. Ser-152 functions as the Acyl-ester intermediate in the catalytic mechanism.

This sequence belongs to the amidase family. GatA subfamily. As to quaternary structure, heterotrimer of A, B and C subunits.

The catalysed reaction is L-glutamyl-tRNA(Gln) + L-glutamine + ATP + H2O = L-glutaminyl-tRNA(Gln) + L-glutamate + ADP + phosphate + H(+). Allows the formation of correctly charged Gln-tRNA(Gln) through the transamidation of misacylated Glu-tRNA(Gln) in organisms which lack glutaminyl-tRNA synthetase. The reaction takes place in the presence of glutamine and ATP through an activated gamma-phospho-Glu-tRNA(Gln). This chain is Glutamyl-tRNA(Gln) amidotransferase subunit A, found in Helicobacter pylori (strain G27).